The chain runs to 277 residues: MAFFIFLILVGYLMGSINSAIIVCRTFGLPDPREEGSKNPGATNVLRLGGKQYGIMVMVFDALKGILPVILAKLLSAEPVTVAFTALAAVVGHMYPVFFHFRGGKGVATTIGALLAFHFVIGVMVAATWLLVANFWRYSSLASIASISLAPFYSLILVGNLNIFPPLFMITILVLYKHRDNFNRLIDGKEPKIKFKHSVIEEIMEASPATSAEQEFPGKEVIDTNIDEAEKTEQAEAVKKPKAKKATTKAKKTTSKEETAKKPKSTKPKTKTVKEKE.

5 consecutive transmembrane segments (helical) span residues 3–23 (FFIF…AIIV), 55–75 (IMVM…AKLL), 79–99 (PVTV…PVFF), 111–131 (IGAL…TWLL), and 155–175 (LILV…ILVL). The interval 231 to 277 (KTEQAEAVKKPKAKKATTKAKKTTSKEETAKKPKSTKPKTKTVKEKE) is disordered. Composition is skewed to basic residues over residues 240 to 253 (KPKA…AKKT) and 262 to 271 (KPKSTKPKTK).

The protein belongs to the PlsY family. Probably interacts with PlsX.

Its subcellular location is the cell inner membrane. It catalyses the reaction an acyl phosphate + sn-glycerol 3-phosphate = a 1-acyl-sn-glycero-3-phosphate + phosphate. It functions in the pathway lipid metabolism; phospholipid metabolism. Its function is as follows. Catalyzes the transfer of an acyl group from acyl-phosphate (acyl-PO(4)) to glycerol-3-phosphate (G3P) to form lysophosphatidic acid (LPA). This enzyme utilizes acyl-phosphate as fatty acyl donor, but not acyl-CoA or acyl-ACP. This Legionella pneumophila (strain Lens) protein is Glycerol-3-phosphate acyltransferase.